Reading from the N-terminus, the 209-residue chain is MSKTPLSIVHPWHGPVLTRDDYESLCCYIEITPSDSVKFELDKETGLLKVDRPQKFSNFCPCLYGLLPKTYCGDLSGEYSGQQSNRDNIKGDGDPLDICVLTEKNITQGNILLQARPIGGIRILDSGEADDKIIAVLEDDLVYGAMEDISDCPGSVLDMIQHYFLTYKATPESLIQAKPAKIEIIGLYGKKEAQKVIRLAHEDYCNLFM.

Substrate is bound by residues K38, R52, and Y64. Residues D92, D97, and D130 each coordinate Mg(2+). Position 167 (Y167) interacts with substrate.

It belongs to the PPase family. In terms of assembly, homohexamer. The cofactor is Mg(2+).

It is found in the cytoplasm. It carries out the reaction diphosphate + H2O = 2 phosphate + H(+). In terms of biological role, catalyzes the hydrolysis of inorganic pyrophosphate (PPi) forming two phosphate ions. This chain is Inorganic pyrophosphatase, found in Chlamydia muridarum (strain MoPn / Nigg).